We begin with the raw amino-acid sequence, 455 residues long: Notoamide E oxidase notB' (455 aa).

A helical transmembrane segment spans residues 11–31; sequence PAILSPADLTVIIVGLGIAGL. FAD is bound by residues glutamate 48 and glycine 61. Residue asparagine 75 is glycosylated (N-linked (GlcNAc...) asparagine). FAD is bound at residue arginine 121. Active-site residues include arginine 199 and tyrosine 229. FAD is bound by residues aspartate 324 and glycine 337.

Belongs to the paxM FAD-dependent monooxygenase family. Requires FAD as cofactor.

It is found in the membrane. The enzyme catalyses notoamide E + NADPH + O2 + H(+) = notoamide C + NADP(+) + H2O. The catalysed reaction is notoamide E + NADPH + O2 + H(+) = notoamide D + NADP(+) + H2O. It functions in the pathway alkaloid biosynthesis. Functionally, FAD-dependent monooxygenase; part of the gene cluster that mediates the biosynthesis of notoamide, a fungal indole alkaloid that belongs to a family of natural products containing a characteristic bicyclo[2.2.2]diazaoctane core. The first step of notoamide biosynthesis involves coupling of L-proline and L-tryptophan by the bimodular NRPS notE', to produce cyclo-L-tryptophan-L-proline called brevianamide F. The reverse prenyltransferase notF' then acts as a deoxybrevianamide E synthase and converts brevianamide F to deoxybrevianamide E via reverse prenylation at C-2 of the indole ring leading to the bicyclo[2.2.2]diazaoctane core. Deoxybrevianamide E is further hydroxylated at C-6 of the indole ring, likely catalyzed by the cytochrome P450 monooxygenase notG', to yield 6-hydroxy-deoxybrevianamide E. 6-hydroxy-deoxybrevianamide E is a specific substrate of the prenyltransferase notC' for normal prenylation at C-7 to produce 6-hydroxy-7-prenyl-deoxybrevianamide, also called notoamide S. As the proposed pivotal branching point in notoamide biosynthesis, notoamide S can be diverted to notoamide E through an oxidative pyran ring closure putatively catalyzed by either notH' cytochrome P450 monooxygenase or the notD' FAD-linked oxidoreductase. This step would be followed by an indole 2,3-epoxidation-initiated pinacol-like rearrangement catalyzed by the notB' FAD-dependent monooxygenase leading to the formation of notoamide C and notoamide D. On the other hand notoamide S is converted to notoamide T by notH' (or notD'), a bifunctional oxidase that also functions as the intramolecular Diels-Alderase responsible for generation of (-)-notoamide T. To generate antipodal (+)-notoaminide T, notH (or notD) in Aspergillus strain MF297-2 is expected to catalyze a Diels-Alder reaction leading to the opposite stereochemistry. The remaining oxidoreductase notD' (or notH') likely catalyzes the oxidative pyran ring formation to yield (-)-stephacidin A. The FAD-dependent monooxygenase notI' is highly similar to notB' and is predicted to catalyze a similar conversion from (-)-stephacidin A to (+)-notoamide B via the 2,3-epoxidation of (-)-stephacidin A followed by a pinacol-type rearrangement. Finally, it remains unclear which enzyme could be responsible for the final hydroxylation steps leading to notoamide A and sclerotiamide. In Aspergillus versicolor, this protein is Notoamide E oxidase notB'.